The following is an 873-amino-acid chain: MASFIWVQLKKTSEVDLAKPLVKFIQQTYPSGGEEQAQYCRAAEELSKLRRSALGRPLDKHEGALETLLRYYDQICSIEPKFPFSENQICLTFTWKDAFDKGSLFGGSVKLALASLGYEKSCVLFNCAALASQIAAEQNLDNDEGLKTAAKQYQFASGAFLHIKDTVLSALSREPTVDISPDTVGTLSLIMLAQAQEVFFLKATRDKMKDAIIAKLANQAADYFGDAFKQCQYKDALPKYFYFQEVFPTLAAKQCIMQANAEYHQSILAKQQKKFGEEIARLQHAAELIKNVASRYDEYVNVKDFSDKINRALAAAKKDNDFIYHDRVPDLKDLDPIGKATLVKPTPVNVPISQKFTDLFEKMVPVSVQQSLAVFSQRKADLVNRSIAQMREATTLANGVLASLNLPAAIEDVSGDTVPQSILTKSTAVVEQGGIQTVDQLIKELPELLQRNREILEESLRLLDEEEATDNDLRAKFKDRWQRTPSNDLYKPLRAEGAKFRAVLDKAVQADGQVKERYQSHRDTIALLCKPEPELNAAIPSANPAKTMQGSEVVNVLKSLLSNLDEIKKEREGLENDLKSVNFDMTSKFLTALAQDGVINEEALSVTELDRIYGGLTTKVQESLKKQEGLLKNIQVSHQEFSKMKQSNSEASLREEVLKNLATAYDNFVELVANLKEGTKFYNELTEILVRFQNKCSDIVFARKTERDELLKDLQQSIAREPSAPSIPPPAYQSSPAGGHATAPTPAPRTMPPAKPQPPARPPPPVLPANRVPPAAAATAPAGVGTASAAPPQTPGSAPPPQAQGPPYPTYPGYPGYCQMPMPMGYNPYTYGQYNMPYPPVYHQSPGQAPYPGPQQPTYPFPQPPQQSYYPQQ.

Alanine 2 is modified (N-acetylalanine). The BRO1 domain occupies 3 to 397 (SFIWVQLKKT…AQMREATTLA (395 aa)). Residues 176–508 (TVDISPDTVG…KFRAVLDKAV (333 aa)) form an interaction with CHMP4A, CHMP4B and CHMP4C region. The residue at position 215 (lysine 215) is an N6-acetyllysine. The interval 423 to 873 (LTKSTAVVEQ…PPQQSYYPQQ (451 aa)) is interaction with SDCBP. The residue at position 484 (threonine 484) is a Phosphothreonine. Serine 486 is modified (phosphoserine). Residues 508–873 (VQADGQVKER…PPQQSYYPQQ (366 aa)) form a self-association region. 2 disordered regions span residues 719-808 (AREP…GPPY) and 837-873 (PYPP…YPQQ). The segment at 722 to 725 (PSAP) is interaction with TSG101. The residue at position 735 (serine 735) is a Phosphoserine. 2 positions are modified to phosphothreonine: threonine 742 and threonine 745. Pro residues predominate over residues 745-767 (TPAPRTMPPAKPQPPARPPPPVL). Omega-N-methylarginine is present on arginine 749. Positions 768–791 (PANRVPPAAAATAPAGVGTASAAP) are enriched in low complexity. Pro residues-rich tracts occupy residues 792–808 (PQTP…GPPY) and 849–865 (APYP…PQPP). An interaction with CEP55 region spans residues 802 to 811 (QAQGPPYPTY).

In terms of assembly, self-associates. Interacts with SH3KBP1. Interacts with PDCD6 in a calcium-dependent manner. Interacts with TSG101 in a calcium-dependent manner; PDCD6IP homooligomerization may be required for TSG101-binding. Interacts with SGSM3. Directly interacts with CHMP4A, CHMP4B and CHMP4C. Directly interacts with CEP55 in a 1:2 stoechiometry; this interaction is required for PDCD6IP targeting to the midbody. May interact with PDGFRB. Interacts with SH3GL1 and SH3GL2/endophilin-1. Forms a complex with SDCBP and SDC2. Found in a complex with F-actin, TJP1/ZO-1 and PARD3. Interacts with CD2AP. Interacts with ARRDC1. Interacts (via BRO1 domain) with the ATG12-ATG3 conjugate; this interaction is bridged by ATG12 and promotes multiple PDCD6IP-mediated functions such as endolysosomal trafficking, macroautophagy and exosome biogenesis. Post-translationally, may be phosphorylated on tyrosine residues by activated PDGFRB. Expressed in astrocytes and glioma cells.

It localises to the cytoplasm. The protein resides in the cytosol. It is found in the melanosome. The protein localises to the cytoskeleton. Its subcellular location is the microtubule organizing center. It localises to the centrosome. The protein resides in the secreted. It is found in the extracellular exosome. The protein localises to the cell junction. Its subcellular location is the tight junction. It localises to the midbody. The protein resides in the midbody ring. Functionally, multifunctional protein involved in endocytosis, multivesicular body biogenesis, membrane repair, cytokinesis, apoptosis and maintenance of tight junction integrity. Class E VPS protein involved in concentration and sorting of cargo proteins of the multivesicular body (MVB) for incorporation into intralumenal vesicles (ILVs) that are generated by invagination and scission from the limiting membrane of the endosome. Binds to the phospholipid lysobisphosphatidic acid (LBPA) which is abundant in MVBs internal membranes. The MVB pathway requires the sequential function of ESCRT-O, -I,-II and -III complexes. The ESCRT machinery also functions in topologically equivalent membrane fission events, such as the terminal stages of cytokinesis. Adapter for a subset of ESCRT-III proteins, such as CHMP4, to function at distinct membranes. Required for completion of cytokinesis. May play a role in the regulation of both apoptosis and cell proliferation. Regulates exosome biogenesis in concert with SDC1/4 and SDCBP. By interacting with F-actin, PARD3 and TJP1 secures the proper assembly and positioning of actomyosin-tight junction complex at the apical sides of adjacent epithelial cells that defines a spatial membrane domain essential for the maintenance of epithelial cell polarity and barrier. The sequence is that of Programmed cell death 6-interacting protein from Rattus norvegicus (Rat).